The chain runs to 494 residues: Alpha-amylase-related protein (494 aa).

The first 20 residues, methionine 1 to alanine 20, serve as a signal peptide directing secretion. Glutamine 21 carries the post-translational modification Pyrrolidone carboxylic acid. A disulfide bridge connects residues cysteine 48 and cysteine 104. Ca(2+) contacts are provided by asparagine 118, glutamine 169, and aspartate 178. Cysteine 157 and cysteine 171 form a disulfide bridge. Residue arginine 206 coordinates chloride. The Nucleophile role is filled by aspartate 208. Residue histidine 212 coordinates Ca(2+). The Proton donor role is filled by glutamate 245. 2 residues coordinate chloride: asparagine 308 and arginine 343. Intrachain disulfides connect cysteine 376–cysteine 382, cysteine 418–cysteine 441, and cysteine 448–cysteine 460.

This sequence belongs to the glycosyl hydrolase 13 family. As to quaternary structure, monomer. It depends on Ca(2+) as a cofactor. The cofactor is chloride.

The protein resides in the secreted. It carries out the reaction Endohydrolysis of (1-&gt;4)-alpha-D-glucosidic linkages in polysaccharides containing three or more (1-&gt;4)-alpha-linked D-glucose units.. The sequence is that of Alpha-amylase-related protein (Amyrel) from Drosophila jambulina (Fruit fly).